Here is a 294-residue protein sequence, read N- to C-terminus: Acetyl-coenzyme A carboxylase carboxyl transferase subunit beta (294 aa).

A CoA carboxyltransferase N-terminal domain is found at 25–294; sequence VWTKCTACEQ…PFLEPEIIAD (270 aa). C29, C32, C48, and C51 together coordinate Zn(2+). A C4-type zinc finger spans residues 29–51; that stretch reads CTACEQVLYRDELKRHLEVCPKC.

It belongs to the AccD/PCCB family. As to quaternary structure, acetyl-CoA carboxylase is a heterohexamer composed of biotin carboxyl carrier protein (AccB), biotin carboxylase (AccC) and two subunits each of ACCase subunit alpha (AccA) and ACCase subunit beta (AccD). The cofactor is Zn(2+).

The protein localises to the cytoplasm. The catalysed reaction is N(6)-carboxybiotinyl-L-lysyl-[protein] + acetyl-CoA = N(6)-biotinyl-L-lysyl-[protein] + malonyl-CoA. It functions in the pathway lipid metabolism; malonyl-CoA biosynthesis; malonyl-CoA from acetyl-CoA: step 1/1. Component of the acetyl coenzyme A carboxylase (ACC) complex. Biotin carboxylase (BC) catalyzes the carboxylation of biotin on its carrier protein (BCCP) and then the CO(2) group is transferred by the transcarboxylase to acetyl-CoA to form malonyl-CoA. In Actinobacillus succinogenes (strain ATCC 55618 / DSM 22257 / CCUG 43843 / 130Z), this protein is Acetyl-coenzyme A carboxylase carboxyl transferase subunit beta.